The sequence spans 145 residues: Small ribosomal subunit protein uS15 (145 aa).

Belongs to the universal ribosomal protein uS15 family. In terms of assembly, part of the 30S ribosomal subunit.

This chain is Small ribosomal subunit protein uS15, found in Thermoplasma acidophilum (strain ATCC 25905 / DSM 1728 / JCM 9062 / NBRC 15155 / AMRC-C165).